A 434-amino-acid chain; its full sequence is Alpha-enolase (434 aa).

Serine 40 is a binding site for Mg(2+). 2 residues coordinate substrate: histidine 158 and glutamate 167. Glutamate 210 (proton donor) is an active-site residue. Positions 245, 293, and 318 each coordinate Mg(2+). 2 residues coordinate substrate: glutamate 293 and aspartate 318. The active-site Proton acceptor is lysine 343. Substrate is bound by residues 370-373 and lysine 394; that span reads SHRS.

Belongs to the enolase family. As to quaternary structure, homodimer. The cofactor is Mg(2+).

It is found in the cytoplasm. It catalyses the reaction (2R)-2-phosphoglycerate = phosphoenolpyruvate + H2O. It functions in the pathway carbohydrate degradation; glycolysis; pyruvate from D-glyceraldehyde 3-phosphate: step 4/5. The protein is Alpha-enolase of Sceloporus undulatus (Eastern fence lizard).